The chain runs to 403 residues: 4-hydroxy-3-methylbut-2-en-1-yl diphosphate synthase (flavodoxin) (403 aa).

The span at 1–16 (MNTENPIEKPFRKTGD) shows a compositional bias: basic and acidic residues. The tract at residues 1-31 (MNTENPIEKPFRKTGDPVDLTSESPLHPRRK) is disordered. Residues cysteine 291, cysteine 294, cysteine 326, and glutamate 333 each coordinate [4Fe-4S] cluster.

Belongs to the IspG family. It depends on [4Fe-4S] cluster as a cofactor.

It catalyses the reaction (2E)-4-hydroxy-3-methylbut-2-enyl diphosphate + oxidized [flavodoxin] + H2O + 2 H(+) = 2-C-methyl-D-erythritol 2,4-cyclic diphosphate + reduced [flavodoxin]. The protein operates within isoprenoid biosynthesis; isopentenyl diphosphate biosynthesis via DXP pathway; isopentenyl diphosphate from 1-deoxy-D-xylulose 5-phosphate: step 5/6. Functionally, converts 2C-methyl-D-erythritol 2,4-cyclodiphosphate (ME-2,4cPP) into 1-hydroxy-2-methyl-2-(E)-butenyl 4-diphosphate. The polypeptide is 4-hydroxy-3-methylbut-2-en-1-yl diphosphate synthase (flavodoxin) (Bifidobacterium longum (strain NCC 2705)).